The following is a 507-amino-acid chain: ATP synthase subunit alpha, chloroplastic (507 aa).

Residue 170-177 (GDRQTGKT) coordinates ATP.

This sequence belongs to the ATPase alpha/beta chains family. In terms of assembly, F-type ATPases have 2 components, CF(1) - the catalytic core - and CF(0) - the membrane proton channel. CF(1) has five subunits: alpha(3), beta(3), gamma(1), delta(1), epsilon(1). CF(0) has four main subunits: a, b, b' and c.

The protein resides in the plastid. It localises to the chloroplast thylakoid membrane. The enzyme catalyses ATP + H2O + 4 H(+)(in) = ADP + phosphate + 5 H(+)(out). Its function is as follows. Produces ATP from ADP in the presence of a proton gradient across the membrane. The alpha chain is a regulatory subunit. The chain is ATP synthase subunit alpha, chloroplastic from Populus alba (White poplar).